We begin with the raw amino-acid sequence, 461 residues long: Argininosuccinate lyase (461 aa).

Belongs to the lyase 1 family. Argininosuccinate lyase subfamily.

It localises to the cytoplasm. It catalyses the reaction 2-(N(omega)-L-arginino)succinate = fumarate + L-arginine. The protein operates within amino-acid biosynthesis; L-arginine biosynthesis; L-arginine from L-ornithine and carbamoyl phosphate: step 3/3. The sequence is that of Argininosuccinate lyase from Aeromonas hydrophila subsp. hydrophila (strain ATCC 7966 / DSM 30187 / BCRC 13018 / CCUG 14551 / JCM 1027 / KCTC 2358 / NCIMB 9240 / NCTC 8049).